Here is a 338-residue protein sequence, read N- to C-terminus: Mitochondrial E3 ubiquitin protein ligase 1 (338 aa).

Residues 1–3 lie on the Cytoplasmic side of the membrane; sequence MEF. A helical transmembrane segment spans residues 4–24; the sequence is LHESVALGVDLLILGLCAREY. Over 25–227 the chain is Mitochondrial intermembrane; the sequence is VHYKRTAKVL…LIKRFEDAKT (203 aa). A helical membrane pass occupies residues 228–248; it reads TTILKLVVCSTISAILVAFIA. Topologically, residues 249–338 are cytoplasmic; that stretch reads KKLYRKRKQE…IVSKAAAFIA (90 aa). Residues 290 to 326 form an RING-type zinc finger; the sequence is CVVCSTNPKEIILLPCGHVCLCEDCAQKISVTCPVCR.

Interacts with Marf. In terms of processing, auto-ubiquitinated.

The protein localises to the mitochondrion outer membrane. It catalyses the reaction S-ubiquitinyl-[E2 ubiquitin-conjugating enzyme]-L-cysteine + [acceptor protein]-L-lysine = [E2 ubiquitin-conjugating enzyme]-L-cysteine + N(6)-ubiquitinyl-[acceptor protein]-L-lysine.. Functionally, exhibits weak E3 ubiquitin-protein ligase activity. E3 ubiquitin ligases accept ubiquitin from an E2 ubiquitin-conjugating enzyme in the form of a thioester and then directly transfer the ubiquitin to targeted substrates. Plays a role in the control of mitochondrial morphology by promoting mitochondrial fission. Negatively regulates the mitochondrial fusion protein marf by promoting its ubiquitination, acting in a pathway that is parallel to the park/pink1 regulatory pathway. This chain is Mitochondrial E3 ubiquitin protein ligase 1, found in Drosophila melanogaster (Fruit fly).